We begin with the raw amino-acid sequence, 179 residues long: UPF0227 protein Ssed_2836 (179 aa).

Belongs to the UPF0227 family.

This is UPF0227 protein Ssed_2836 from Shewanella sediminis (strain HAW-EB3).